The following is a 773-amino-acid chain: Polyribonucleotide nucleotidyltransferase (773 aa).

Asp-490 and Asp-496 together coordinate Mg(2+). The 60-residue stretch at 557 to 616 folds into the KH domain; it reads PKIDTITIPVDKIKVVIGKGGEQIDKIIAETGVKIDIDDEGLCSIFSSDQAAIDRAKEII. Residues 626–694 enclose the S1 motif domain; it reads GEIYDAKVVR…DKGRVDASMR (69 aa). The span at 700 to 721 shows a compositional bias: basic and acidic residues; sequence PEGYVEPERKPRERRENGDRRK. The disordered stretch occupies residues 700-773; it reads PEGYVEPERK…FPELSTKKPE (74 aa). Low complexity predominate over residues 739–748; the sequence is RNNQGNKVGN. A compositionally biased stretch (basic and acidic residues) spans 751-773; the sequence is FELRERKSHIDEEFPELSTKKPE.

The protein belongs to the polyribonucleotide nucleotidyltransferase family. Mg(2+) serves as cofactor.

The protein localises to the cytoplasm. It catalyses the reaction RNA(n+1) + phosphate = RNA(n) + a ribonucleoside 5'-diphosphate. In terms of biological role, involved in mRNA degradation. Catalyzes the phosphorolysis of single-stranded polyribonucleotides processively in the 3'- to 5'-direction. This Lactococcus lactis subsp. lactis (strain IL1403) (Streptococcus lactis) protein is Polyribonucleotide nucleotidyltransferase.